The chain runs to 461 residues: O-methyltransferase CTB2 (461 aa).

Asp288 contributes to the S-adenosyl-L-methionine binding site. Residue His339 is the Proton acceptor of the active site.

The protein belongs to the class I-like SAM-binding methyltransferase superfamily. Cation-independent O-methyltransferase family. COMT subfamily.

It functions in the pathway mycotoxin biosynthesis. O-methyltransferase; part of the gene cluster that mediates the biosynthesis of cercosporin, a light-activated, non-host-selective toxin. The perylenequinone chromophore of cercosporin absorbs light energy to attain an electronically-activated triplet state and produces active oxygen species such as the hydroxyl radical, superoxide, hydrogen peroxide or singlet oxygen upon reaction with oxygen molecules. These reactive oxygen species cause damage to various cellular components including lipids, proteins and nucleic acids. The first step of cercosporin biosynthesis is performed by the polyketide synthase CTB1 which catalyzes the formation of nor-toralactone. The starter unit acyltransferase (SAT) domain of CTB1 initiates polyketide extension by the selective utilization of acetyl-CoA, which is elongated to the heptaketide in the beta-ketoacyl synthase (KS) domain by successive condensations with six malonyl units introduced by the malonyl acyltransferase (MAT) domain. The product template (PT) domain catalyzes C4-C9 and C2-C11 aldol cyclizations and dehydrations to a trihydroxynaphthalene, which is thought to be delivered to the thioesterase (TE) domain for product release. The bifunctional enzyme CTB3 then methylates nor-toralactone to toralactone before conducting an unusual oxidative aromatic ring opening. The O-methyltransferase CTB2 further methylates the nascent OH-6 of the CBT3 product, blocking further oxidation at this site before the reductase CTB6 reduces the 2-oxopropyl ketone at position C7, giving naphthalene. The FAD-dependent monooxygenase CTB5 in concert with the multicopper oxidase CTB12 are responsible for homodimerization of naphthalene with CTB7 installing the dioxepine moiety, finally producing cercosporin. The fasciclin domain-containing protein CTB11 might act with CTB5 and CTB12 whereas the roles of CTB9 and CTB10 have still to be elucidated. This Cercospora nicotianae (Barn spot disease fungus) protein is O-methyltransferase CTB2.